A 639-amino-acid polypeptide reads, in one-letter code: tRNA-dihydrouridine(47) synthase [NAD(P)(+)]-like (639 aa).

2 stretches are compositionally biased toward polar residues: residues 1–19 and 54–65; these read MAES…TVTQ and QTCSELSGNDAE. 2 disordered regions span residues 1 to 20 and 52 to 122; these read MAES…VTQK and DKQT…HSQF. Basic and acidic residues predominate over residues 66–85; that stretch reads NTVRAEDAAEPEAKRIKLDD. Over residues 103–119 the composition is skewed to basic residues; sequence EKKRARGQNKSRPHMKH. C3H1-type zinc fingers lie at residues 122–152 and 160–190; these read FEEN…HDVA and EDIR…HLGD. FMN is bound by residues 300–302 and Gln354; that span reads PLT. Catalysis depends on Cys385, which acts as the Proton donor. FMN contacts are provided by residues Lys424, His454, 486-488, and 509-510; these read NGD and AR.

This sequence belongs to the Dus family. Dus3 subfamily. It depends on FMN as a cofactor.

The enzyme catalyses 5,6-dihydrouridine(47) in tRNA + NAD(+) = uridine(47) in tRNA + NADH + H(+). The catalysed reaction is 5,6-dihydrouridine(47) in tRNA + NADP(+) = uridine(47) in tRNA + NADPH + H(+). It carries out the reaction a 5,6-dihydrouridine in mRNA + NAD(+) = a uridine in mRNA + NADH + H(+). It catalyses the reaction a 5,6-dihydrouridine in mRNA + NADP(+) = a uridine in mRNA + NADPH + H(+). Its function is as follows. Catalyzes the synthesis of dihydrouridine, a modified base, in various RNAs, such as tRNAs, mRNAs and some long non-coding RNAs (lncRNAs). Mainly modifies the uridine in position 47 (U47) in the D-loop of most cytoplasmic tRNAs. Also able to mediate the formation of dihydrouridine in some mRNAs, thereby regulating their translation. In Xenopus tropicalis (Western clawed frog), this protein is tRNA-dihydrouridine(47) synthase [NAD(P)(+)]-like (dus3l).